The chain runs to 156 residues: MKVIEGGFPAPNAKIAIVISRFNSFINESLLSGAIDTLKRHGQVSEDNITVVRCPGAVELPLVAQRVAKTGKFDAIVSLGSVIRGGTPHFDYVCSEMNKGLAQVSLEFSIPVAFGVLTVDTIDQAIERAGTKAGNKGAEAALSALEMINVLSEIDS.

Residues F22, 57–59 (AVE), and 81–83 (SVI) each bind 5-amino-6-(D-ribitylamino)uracil. 86–87 (GT) serves as a coordination point for (2S)-2-hydroxy-3-oxobutyl phosphate. H89 (proton donor) is an active-site residue. F114 is a 5-amino-6-(D-ribitylamino)uracil binding site. Position 128 (R128) interacts with (2S)-2-hydroxy-3-oxobutyl phosphate.

The protein belongs to the DMRL synthase family. As to quaternary structure, forms an icosahedral capsid composed of 60 subunits, arranged as a dodecamer of pentamers.

It catalyses the reaction (2S)-2-hydroxy-3-oxobutyl phosphate + 5-amino-6-(D-ribitylamino)uracil = 6,7-dimethyl-8-(1-D-ribityl)lumazine + phosphate + 2 H2O + H(+). It participates in cofactor biosynthesis; riboflavin biosynthesis; riboflavin from 2-hydroxy-3-oxobutyl phosphate and 5-amino-6-(D-ribitylamino)uracil: step 1/2. Catalyzes the formation of 6,7-dimethyl-8-ribityllumazine by condensation of 5-amino-6-(D-ribitylamino)uracil with 3,4-dihydroxy-2-butanone 4-phosphate. This is the penultimate step in the biosynthesis of riboflavin. The polypeptide is 6,7-dimethyl-8-ribityllumazine synthase (Vibrio vulnificus (strain CMCP6)).